The chain runs to 750 residues: Putative tyrosine-protein kinase EpsB (750 aa).

Residues 1–31 are Cytoplasmic-facing; it reads MTQNLPQPPAVNAPENELDLVRYLDVLVANR. A helical membrane pass occupies residues 32–52; the sequence is WLIAGIAAAVMLLGAAYAFLA. Topologically, residues 53 to 444 are periplasmic; it reads RPVYEADIMV…VPEEPVKPKK (392 aa). Residues 445 to 465 form a helical membrane-spanning segment; that stretch reads LTVTPLAGVLGVVLGVMAAFV. The Cytoplasmic segment spans residues 466–750; sequence RNALFGGITD…NSKPPEAESA (285 aa).

It belongs to the etk/wzc family.

The protein localises to the cell inner membrane. It catalyses the reaction L-tyrosyl-[protein] + ATP = O-phospho-L-tyrosyl-[protein] + ADP + H(+). In terms of biological role, probably involved in polymerization and/or export of exopolysaccharide EPS I which functions as a virulence factor. May be involved in an ATP-dependent process in the pathway for EPS I production, possibly export of the trimeric repeat units across the inner membrane or their polymerization. The protein is Putative tyrosine-protein kinase EpsB (epsB) of Ralstonia solanacearum (Pseudomonas solanacearum).